We begin with the raw amino-acid sequence, 530 residues long: Tetrahydroberberine oxidase (530 aa).

The signal sequence occupies residues 1-24; that stretch reads MSKMASSIFATFSLLSSLLPTSLA. An intrachain disulfide couples cysteine 36 to cysteine 94. N-linked (GlcNAc...) asparagine glycosylation occurs at asparagine 51. One can recognise an FAD-binding PCMH-type domain in the interval 72–246; it reads TTPKPNFIVT…LAWKIRLVPV (175 aa). The segment at residues 109-171 is a cross-link (6-(S-cysteinyl)-8alpha-(pros-histidyl)-FAD (His-Cys)); the sequence is HDFEGLSYVS…GVHAFPAGLC (63 aa). Asparagine 483 is a glycosylation site (N-linked (GlcNAc...) asparagine).

This sequence belongs to the oxygen-dependent FAD-linked oxidoreductase family. Requires FAD as cofactor. In terms of processing, the FAD cofactor is bound via a bicovalent 6-S-cysteinyl, 8alpha-N1-histidyl FAD linkage.

It carries out the reaction (S)-canadine + 2 O2 + H(+) = berberine + 2 H2O2. Functionally, catalyzes the oxidation of different tetrahydroprotoberberines, such as (S)-canadine, (S)-scoulerine and (S)-corypalmine. Catalyzes the oxidation of (S)-coreximine and (S)-tetrahydropalmatine. Catalyzes the oxidation of different 1-benzylisoquinoline alkaloids, such as (S)-norreticuline, (S)-nororientaline, (S)-coclaurine and (S)-norisoorientaline. Exhibits strict specificity for the (S)-enantiomer of tetrahydroprotoberbirines and 1-benzylisoquinoline alkaloids. The chain is Tetrahydroberberine oxidase from Berberis wilsoniae (Mrs Wilson's barberry).